The chain runs to 433 residues: Pyroglutamylated RF-amide peptide receptor (433 aa).

Residues 1–46 (MQALNITAEQFSRLLSAHNLTREQFIHRYGLRPLVYTPELPARAKV) lie on the Extracellular side of the membrane. N-linked (GlcNAc...) asparagine glycosylation is found at Asn5 and Asn19. Residues 47 to 67 (AFALAGALIFALALFGNSLVI) form a helical membrane-spanning segment. Topologically, residues 68–81 (YVVTRSKAMRTVTN) are cytoplasmic. Residues 82 to 102 (IFICSLALSDLLIAFFCIPVT) traverse the membrane as a helical segment. The Extracellular segment spans residues 103-120 (MLQNISDKWLGGAFICKM). Residues 121–141 (VPFVQSTAVVTEILTMTCIAV) form a helical membrane-spanning segment. Over 142 to 162 (ERHQGLVHPFKMKWQYTTRRA) the chain is Cytoplasmic. The chain crosses the membrane as a helical span at residues 163–183 (FTILGVVWLAAIIVGSPMWHV). The Extracellular portion of the chain corresponds to 184–212 (QRLEIKYDFLYEKEHICCLEEWASPVHQR). The helical transmembrane segment at 213–233 (IYSTFILVILFLLPLVVMLVL) threads the bilayer. Topologically, residues 234-271 (YSKIGYELWIKKRVGDSSALQTIHGKEMSKIARKKKRA) are cytoplasmic. A helical transmembrane segment spans residues 272-292 (VIMMVTVVALFAACWAPFHVV). Residues 293 to 313 (HMMVEYSNFEKEYDDVTIKMV) are Extracellular-facing. Residues 314–334 (FAVAQTIGFFNSICNPFVYAF) traverse the membrane as a helical segment. At 335–433 (MNENFKKNFL…NSTFGSGHEL (99 aa)) the chain is on the cytoplasmic side. Residues 356 to 389 (SSPARKPGNSGISMMQKRAKLSRPQRPVEETKGD) form a disordered region.

This sequence belongs to the G-protein coupled receptor 1 family. Highly expressed in the adrenal gland and at moderate levels in the eye and testis. Expressed widely in the brain with high levels in the hypothalamus and moderate levels in the amygdala, basal forebrain, cortex, medulla oblongata, midbrain and thalamus.

It localises to the cell membrane. Functionally, receptor for the orexigenic neuropeptide QRFP. The activity of this receptor is mediated by G proteins that modulate adenylate cyclase activity and intracellular calcium levels. The polypeptide is Pyroglutamylated RF-amide peptide receptor (Qrfpr) (Rattus norvegicus (Rat)).